Here is a 286-residue protein sequence, read N- to C-terminus: Bifunctional protein FolD (286 aa).

Residues 165–167 (GRS) and serine 190 contribute to the NADP(+) site.

The protein belongs to the tetrahydrofolate dehydrogenase/cyclohydrolase family. In terms of assembly, homodimer.

It carries out the reaction (6R)-5,10-methylene-5,6,7,8-tetrahydrofolate + NADP(+) = (6R)-5,10-methenyltetrahydrofolate + NADPH. The catalysed reaction is (6R)-5,10-methenyltetrahydrofolate + H2O = (6R)-10-formyltetrahydrofolate + H(+). Its pathway is one-carbon metabolism; tetrahydrofolate interconversion. Catalyzes the oxidation of 5,10-methylenetetrahydrofolate to 5,10-methenyltetrahydrofolate and then the hydrolysis of 5,10-methenyltetrahydrofolate to 10-formyltetrahydrofolate. This Staphylococcus epidermidis (strain ATCC 35984 / DSM 28319 / BCRC 17069 / CCUG 31568 / BM 3577 / RP62A) protein is Bifunctional protein FolD.